The following is a 205-amino-acid chain: Protein Nef (205 aa).

A lipid anchor (N-myristoyl glycine; by host) is attached at glycine 2. A Phosphoserine; by host modification is found at serine 6. An acidic; interacts with host PACS1 and PACS2; stabilizes the interaction of NEF/MHC-I with host AP1M1; necessary for MHC-I internalization region spans residues glutamate 61 to glutamate 65. The SH3-binding; interaction with Src family tyrosine kinases stretch occupies residues proline 69–proline 78. Residues proline 72–proline 75 carry the PxxP; stabilizes the interaction of NEF/MHC-I with host AP1M1; necessary for MHC-I internalization motif. Residues glutamate 108–tryptophan 124 form a mediates dimerization, Nef-PTE1 interaction region. The segment at valine 148–valine 180 is binding to ATP6V1H. Positions leucine 164 to leucine 165 match the Dileucine internalization motif; necessary for CD4 internalization motif. The Diacidic; necessary for CD4 internalization signature appears at aspartate 174–aspartate 175.

The protein belongs to the lentivirus primate group Nef protein family. In terms of assembly, monomer; cytosolic form. Homodimer; membrane bound form. Interacts with Nef associated p21-activated kinase (PAK2); this interaction activates PAK2. Associates with the Nef-MHC-I-AP1 complex; this complex is required for MHC-I internalization. Interacts (via C-terminus) with host PI3-kinase. Interacts with host PACS1; this interaction seems to be weak. Interacts with host PACS2. Interacts with host LCK and MAPK3; these interactions inhibit the kinase activity of the latter. Interacts with host ATP6V1H; this interaction may play a role in CD4 endocytosis. Associates with the CD4-Nef-AP2 complex; this complex is required for CD4 internalization. Interacts with host AP2 subunit alpha and AP2 subunit sigma2. Interacts with TCR-zeta chain; this interaction up-regulates the Fas ligand (FasL) surface expression. Interacts with host HCK, LYN, and SRC; these interactions activate the Src family kinases. Interacts with MAP3K5; this interaction inhibits the Fas and TNFR-mediated death signals. Interacts with beta-COP and PTE1. Interacts with human RACK1; this increases Nef phosphorylation by PKC. Interacts with TP53; this interaction decreases the half-life of TP53, protecting the infected cell against p53-mediated apoptosis. Post-translationally, the virion-associated Nef proteins are cleaved by the viral protease to release the soluble C-terminal core protein. Nef is probably cleaved concomitantly with viral structural proteins on maturation of virus particles. In terms of processing, myristoylated. Phosphorylated on serine residues, probably by host PKCdelta and theta.

It localises to the host cell membrane. The protein localises to the virion. It is found in the secreted. The protein resides in the host Golgi apparatus membrane. In terms of biological role, factor of infectivity and pathogenicity, required for optimal virus replication. Alters numerous pathways of T-lymphocyte function and down-regulates immunity surface molecules in order to evade host defense and increase viral infectivity. Alters the functionality of other immunity cells, like dendritic cells, monocytes/macrophages and NK cells. Its function is as follows. In infected CD4(+) T-lymphocytes, down-regulates the surface MHC-I, mature MHC-II, CD4, CD28, CCR5 and CXCR4 molecules. Mediates internalization and degradation of host CD4 through the interaction of with the cytoplasmic tail of CD4, the recruitment of AP-2 (clathrin adapter protein complex 2), internalization through clathrin coated pits, and subsequent transport to endosomes and lysosomes for degradation. Diverts host MHC-I molecules to the trans-Golgi network-associated endosomal compartments by an endocytic pathway to finally target them for degradation. MHC-I down-regulation may involve AP-1 (clathrin adapter protein complex 1) or possibly Src family kinase-ZAP70/Syk-PI3K cascade recruited by PACS2. In consequence infected cells are masked for immune recognition by cytotoxic T-lymphocytes. Decreasing the number of immune receptors also prevents reinfection by more HIV particles (superinfection). Down-regulates host SERINC3 and SERINC5 thereby excluding these proteins from the viral particles. Virion infectivity is drastically higher when SERINC3 or SERINC5 are excluded from the viral envelope, because these host antiviral proteins impair the membrane fusion event necessary for subsequent virion penetration. Bypasses host T-cell signaling by inducing a transcriptional program nearly identical to that of anti-CD3 cell activation. Interaction with TCR-zeta chain up-regulates the Fas ligand (FasL). Increasing surface FasL molecules and decreasing surface MHC-I molecules on infected CD4(+) cells send attacking cytotoxic CD8+ T-lymphocytes into apoptosis. Functionally, plays a role in optimizing the host cell environment for viral replication without causing cell death by apoptosis. Protects the infected cells from apoptosis in order to keep them alive until the next virus generation is ready to strike. Inhibits the Fas and TNFR-mediated death signals by blocking MAP3K5/ASK1. Decreases the half-life of TP53, protecting the infected cell against p53-mediated apoptosis. Inhibits the apoptotic signals regulated by the Bcl-2 family proteins through the formation of a Nef/PI3-kinase/PAK2 complex that leads to activation of PAK2 and induces phosphorylation of host BAD. In terms of biological role, extracellular Nef protein targets CD4(+) T-lymphocytes for apoptosis by interacting with CXCR4 surface receptors. In Human immunodeficiency virus type 1 group M subtype A (isolate Z321) (HIV-1), this protein is Protein Nef.